Here is a 381-residue protein sequence, read N- to C-terminus: Spermidine/putrescine import ATP-binding protein PotA (381 aa).

The region spanning 19–249 is the ABC transporter domain; sequence VELRKVFKVF…PESPFVADFI (231 aa). Residue 51–58 participates in ATP binding; the sequence is GPSGCGKT.

It belongs to the ABC transporter superfamily. Spermidine/putrescine importer (TC 3.A.1.11.1) family. As to quaternary structure, the complex is composed of two ATP-binding proteins (PotA), two transmembrane proteins (PotB and PotC) and a solute-binding protein (PotD).

The protein localises to the cell inner membrane. The enzyme catalyses ATP + H2O + polyamine-[polyamine-binding protein]Side 1 = ADP + phosphate + polyamineSide 2 + [polyamine-binding protein]Side 1.. Part of the ABC transporter complex PotABCD involved in spermidine/putrescine import. Responsible for energy coupling to the transport system. In Trichodesmium erythraeum (strain IMS101), this protein is Spermidine/putrescine import ATP-binding protein PotA.